A 235-amino-acid polypeptide reads, in one-letter code: Transmembrane emp24 domain-containing protein 9 (235 aa).

Positions 1–37 (MAAERSLWVVGLCPGSRLGRVVRVLLLLLWFAARGGA) are cleaved as a signal peptide. The Lumenal segment spans residues 38–201 (LYFHIGETEK…FRQTSESTNQ (164 aa)). One can recognise a GOLD domain in the interval 47 to 145 (KKCFIEEIPD…MLRVHLDIQV (99 aa)). Residues 121-160 (CLHSNSTKFSLFAGGMLRVHLDIQVGEHANDYAEIAAKDK) are required for interaction with STX17. Asparagine 125 carries an N-linked (GlcNAc...) asparagine glycan. Residues 154-184 (EIAAKDKLSELQLRVRQLVEQVEQIQKEQNY) are a coiled coil. Lysine 160 is subject to N6-acetyllysine. The chain crosses the membrane as a helical span at residues 202–222 (RVLWWSILQTLILVAIGVWQM). At 223–235 (RHLKSFFEAKKLV) the chain is on the cytoplasmic side. Residues 228–229 (FF) carry the COPII vesicle coat-binding motif. Positions 228 to 235 (FFEAKKLV) match the COPI vesicle coat-binding motif.

The protein belongs to the EMP24/GP25L family. In terms of assembly, monomer and homodimer in endoplasmic reticulum. Predominantly monomeric and to lesser extent homodimeric in endoplasmic reticulum-Golgi intermediate compartment and cis-Golgi network. Probably oligomerizes with other members of the EMP24/GP25L family such as TMED2, TMED7 and TMED10. Interacts with TMED5. Interacts (via C-terminus) with COPG1; the interaction involves dimeric TMED9. Interacts with PTPN2 and SPAST. Interacts with STX17; the interaction is direct. N-linked glycosylated containing high mannose.

It is found in the endoplasmic reticulum membrane. The protein resides in the golgi apparatus. Its subcellular location is the cis-Golgi network membrane. The protein localises to the endoplasmic reticulum-Golgi intermediate compartment membrane. It localises to the trans-Golgi network membrane. Its function is as follows. Appears to be involved in vesicular protein trafficking, mainly in the early secretory pathway. In COPI vesicle-mediated retrograde transport involved in the coatomer recruitment to membranes of the early secretory pathway. Increases coatomer-dependent activity of ARFGAP2. Thought to play a crucial role in the specific retention of p24 complexes in cis-Golgi membranes; specifically contributes to the coupled localization of TMED2 and TMED10 in the cis-Golgi network. May be involved in organization of intracellular membranes, such as of the ER-Golgi intermediate compartment and the Golgi apparatus. Involved in ER localization of PTPN2. This Bos taurus (Bovine) protein is Transmembrane emp24 domain-containing protein 9 (TMED9).